The sequence spans 405 residues: Acetate kinase (405 aa).

Asparagine 7 lines the Mg(2+) pocket. Lysine 14 contributes to the ATP binding site. Arginine 98 lines the substrate pocket. Aspartate 155 serves as the catalytic Proton donor/acceptor. ATP contacts are provided by residues 215 to 219 (HLGNG), 289 to 291 (DMR), and 337 to 341 (GIGEN). Residue glutamate 391 coordinates Mg(2+).

The protein belongs to the acetokinase family. Homodimer. Requires Mg(2+) as cofactor. Mn(2+) is required as a cofactor.

The protein localises to the cytoplasm. The catalysed reaction is acetate + ATP = acetyl phosphate + ADP. It participates in metabolic intermediate biosynthesis; acetyl-CoA biosynthesis; acetyl-CoA from acetate: step 1/2. In terms of biological role, catalyzes the formation of acetyl phosphate from acetate and ATP. Can also catalyze the reverse reaction. The polypeptide is Acetate kinase (Desulfotalea psychrophila (strain LSv54 / DSM 12343)).